The sequence spans 240 residues: MADS-box protein SVP (240 aa).

Residues 3 to 57 (REKIQIRKIDNATARQVTFSKRRRGLFKKAEELSVLCDADVALIIFSSTGKLFEF) enclose the MADS-box domain. The K-box domain maps to 87 to 180 (QLVENSDHAR…GTQLTEENER (94 aa)). The disordered stretch occupies residues 202–240 (VYEEGQSSESITNAGNSTGAPVDSESSDTSLRLGLPYGG). A compositionally biased stretch (polar residues) spans 206 to 220 (GQSSESITNAGNSTG).

As to quaternary structure, forms a heterodimer with AP1 and SVP. Interacts with the SEU-LUG corepressor complex when complexed to AP1. Interacts with AGL15. Interacts with AGL16. Detected in roots and leaves. Expressed at very low levels in flowers and siliques. Present in floral meristems.

Its subcellular location is the nucleus. Transcription repressor that inhibit floral transition in the autonomous flowering pathway, independent of photoperiod and temperature. Acts in a dosage-dependent manner. Together with AGL24 and AP1, controls the identity of the floral meristem and regulates expression of class B, C and E genes. Promotes EFM expression to suppress flowering. This is MADS-box protein SVP from Arabidopsis thaliana (Mouse-ear cress).